Here is a 128-residue protein sequence, read N- to C-terminus: Virion-associated protein (128 aa).

Coiled coils occupy residues 1–30 (MNLATIASEIEVVKTNQKTIESKIDQILAK) and 37–58 (ESSNLESVAAKIISDLTKEMKE). Positions 98–128 (FDVGNEGMGSSTNPNALKWPPTEKPQPWPPR) are disordered. Residues 119–128 (TEKPQPWPPR) are compositionally biased toward pro residues. The interval 122 to 128 (PQPWPPR) is capsid binding.

This sequence belongs to the caulimovirus ORF III family. In terms of assembly, homotetramer, through coiled-coil domain. Homotrimer when interacts with icosehadral capsid. Interacts with capsid protein, and with Movement protein.

It localises to the virion. Its subcellular location is the host cell junction. The protein resides in the host plasmodesma. Plays a role in virus cell-to-cell and plant-to-plant transmission. Interacts with virion icosahedral capsid and movement protein, thereby facilitating virion cell-to-cell transmission through plasmodesmata opened by viral movement protein. Also interacts with aphid transmission factor, attaching the virion to aphid stylet when the animal feeds on an virus infected plant. Aphid saliva may later detach the virion, inducing release of infectious particles when the animal feeds on a new plant. This is Virion-associated protein from Carnation etched ring virus (CERV).